Here is a 238-residue protein sequence, read N- to C-terminus: Ribonuclease PH (238 aa).

Phosphate-binding positions include Arg86 and 124–126 (GTR).

The protein belongs to the RNase PH family. In terms of assembly, homohexameric ring arranged as a trimer of dimers.

The enzyme catalyses tRNA(n+1) + phosphate = tRNA(n) + a ribonucleoside 5'-diphosphate. Phosphorolytic 3'-5' exoribonuclease that plays an important role in tRNA 3'-end maturation. Removes nucleotide residues following the 3'-CCA terminus of tRNAs; can also add nucleotides to the ends of RNA molecules by using nucleoside diphosphates as substrates, but this may not be physiologically important. Probably plays a role in initiation of 16S rRNA degradation (leading to ribosome degradation) during starvation. The sequence is that of Ribonuclease PH from Vibrio atlanticus (strain LGP32) (Vibrio splendidus (strain Mel32)).